We begin with the raw amino-acid sequence, 200 residues long: Recombination protein RecR (200 aa).

The C4-type zinc finger occupies 57-72; sequence CQECRTFTEQDVCHIC. The Toprim domain occupies 81–176; it reads GQLCVVESPA…TASRIAHGVP (96 aa).

It belongs to the RecR family.

Its function is as follows. May play a role in DNA repair. It seems to be involved in an RecBC-independent recombinational process of DNA repair. It may act with RecF and RecO. This Vibrio cholerae serotype O1 (strain ATCC 39541 / Classical Ogawa 395 / O395) protein is Recombination protein RecR.